The chain runs to 350 residues: Protein-glutamate methylesterase/protein-glutamine glutaminase (350 aa).

The region spanning 5-122 (KVLCVDDSAL…RDGLIEYSEV (118 aa)) is the Response regulatory domain. Asp-56 is subject to 4-aspartylphosphate. Residues 152–346 (PFASSEKLVI…ERILTRLGDR (195 aa)) enclose the CheB-type methylesterase domain. Residues Ser-165, His-191, and Asp-288 contribute to the active site.

Belongs to the CheB family. Post-translationally, phosphorylated by CheA. Phosphorylation of the N-terminal regulatory domain activates the methylesterase activity.

The protein resides in the cytoplasm. It catalyses the reaction [protein]-L-glutamate 5-O-methyl ester + H2O = L-glutamyl-[protein] + methanol + H(+). It carries out the reaction L-glutaminyl-[protein] + H2O = L-glutamyl-[protein] + NH4(+). Functionally, involved in chemotaxis. Part of a chemotaxis signal transduction system that modulates chemotaxis in response to various stimuli. Catalyzes the demethylation of specific methylglutamate residues introduced into the chemoreceptors (methyl-accepting chemotaxis proteins or MCP) by CheR. Also mediates the irreversible deamidation of specific glutamine residues to glutamic acid. The sequence is that of Protein-glutamate methylesterase/protein-glutamine glutaminase from Bordetella bronchiseptica (strain ATCC BAA-588 / NCTC 13252 / RB50) (Alcaligenes bronchisepticus).